We begin with the raw amino-acid sequence, 288 residues long: Putative N-terminal acetyltransferase 2 (288 aa).

The segment at 68-90 (TEEKSSQFDENKSKSNNGKKNEP) is disordered.

In terms of assembly, heterooligomeric.

The protein resides in the cytoplasm. Its function is as follows. Maybe involved in N-terminal acetylation of proteins. N-acetylation plays a role in normal eukaryotic translation and processing, protect against proteolytic degradation and protein turnover. The polypeptide is Putative N-terminal acetyltransferase 2 (NAT2) (Saccharomyces cerevisiae (strain ATCC 204508 / S288c) (Baker's yeast)).